A 258-amino-acid chain; its full sequence is Serine/arginine-rich splicing factor x16 (258 aa).

Positions 8–81 constitute an RRM domain; sequence RKVYVGDLGN…RRARVELSTG (74 aa). Disordered regions lie at residues 81 to 113 and 130 to 258; these read GKYARSGGGGGGGGGGGGGGGLGGRDRGGGGRG and CRER…VSRD. A compositionally biased stretch (gly residues) spans 86 to 103; the sequence is SGGGGGGGGGGGGGGGLG. Positions 104 to 113 are enriched in basic and acidic residues; sequence GRDRGGGGRG. Residues 116-132 form a CCHC-type zinc finger; sequence KCYECGGRGHFARHCRE. Composition is skewed to basic residues over residues 130-141 and 149-166; these read CRERKARQRRRS and STSRRRRTRSKSGTRSRS. Basic and acidic residues-rich tracts occupy residues 180–197 and 210–221; these read NGRDENGSASRYSDHERN and RRYEDEDDDRVR. 2 stretches are compositionally biased toward low complexity: residues 231–240 and 249–258; these read RSASPAVRRG and SSASRSVSRD.

Interacts (via Arg/Ser-rich region) with Alsin2/CG7564, Rbp1 and Doa (via N-terminus). In terms of processing, highly phosphorylated. May be phosphorylated by the serine/threonine-protein kinase Doa.

It is found in the nucleus. Functionally, serine/arginine-rich splicing factor (SR protein) involved in differential exon usage during RNA transcript processing, probably by binding exonic splicing enhancer elements and recruiting components of the splicing machinery. Binds RNA stem-loop structures with consensus sequence 5'-CCGUNUNKNW-3'. Regulator of genes involved in lipid and carbohydrate metabolism, the immune response and the response to xenobiotics. This chain is Serine/arginine-rich splicing factor x16, found in Drosophila melanogaster (Fruit fly).